Here is a 206-residue protein sequence, read N- to C-terminus: Oligoribonuclease (206 aa).

The Exonuclease domain maps to 20 to 183 (LVWLDMEMTG…ADIHESIDEL (164 aa)). Y141 is an active-site residue.

The protein belongs to the oligoribonuclease family.

The protein localises to the cytoplasm. Its function is as follows. 3'-to-5' exoribonuclease specific for small oligoribonucleotides. The sequence is that of Oligoribonuclease from Burkholderia lata (strain ATCC 17760 / DSM 23089 / LMG 22485 / NCIMB 9086 / R18194 / 383).